We begin with the raw amino-acid sequence, 388 residues long: Cell adhesion molecule 4 (388 aa).

The first 20 residues, M1 to G20, serve as a signal peptide directing secretion. Residues P21–T119 form the Ig-like V-type domain. Residues P21–A324 are Extracellular-facing. Residues N31 and N67 are each glycosylated (N-linked (GlcNAc...) asparagine). Intrachain disulfides connect C44-C104, C145-C199, and C245-C291. 2 Ig-like C2-type domains span residues P124–D219 and P224–V307. A glycan (N-linked (GlcNAc...) asparagine) is linked at N286. A helical transmembrane segment spans residues I325–V345. The Cytoplasmic portion of the chain corresponds to W346–I388. S361 carries the phosphoserine modification.

It belongs to the nectin family. In terms of assembly, monomer and homodimer. Post-translationally, N-glycosylated. As to expression, expressed in brain, prostate, brain, kidney and some other organs.

It localises to the membrane. Involved in the cell-cell adhesion. Has calcium- and magnesium-independent cell-cell adhesion activity. May have tumor-suppressor activity. In Homo sapiens (Human), this protein is Cell adhesion molecule 4 (CADM4).